Reading from the N-terminus, the 336-residue chain is Abasic site processing protein HMCES (336 aa).

Catalysis depends on Cys-2, which acts as the Nucleophile. Cys-2 is modified (thiazolidine linkage to a ring-opened DNA abasic site). Basic and acidic residues predominate over residues 29 to 38; that stretch reads QPEWLREGRY. The tract at residues 29–52 is disordered; the sequence is QPEWLREGRYRPSYNKGPQSSGPV. Residue Glu-127 is part of the active site. A disordered region spans residues 283 to 336; it reads LKSSQEGSPQKKEDTLPRWKSQFIHSPSPKKSSAGILRQWLGQEGGPPAKKQKA.

This sequence belongs to the SOS response-associated peptidase family.

The protein resides in the chromosome. Formation and reversal of DNA-protein cross-link depends on DNA context. Catalyzes formation of the thiazolidine linkage in presence of abasic sites in single-stranded DNA. Mediates the reversal of the thiazolidine cross-link in presence of double stranded DNA. Its function is as follows. Sensor of abasic sites in single-stranded DNA (ssDNA) required to preserve genome integrity by promoting error-free repair of abasic sites. Acts as an enzyme that recognizes and binds abasic sites in ssDNA at replication forks and chemically modifies the lesion by forming a covalent cross-link with DNA: forms a stable thiazolidine linkage between a ring-opened abasic site and the alpha-amino and sulfhydryl substituents of its N-terminal catalytic cysteine residue. The HMCES DNA-protein cross-link is then either reversed or degraded. HMCES is able to catalyze the reversal of its thiazolidine cross-link and cycle between a cross-link and a non-cross-linked state depending on DNA context: mediates self-reversal of the thiazolidine cross-link in double stranded DNA, allowing APEX1 to initiate downstream repair of abasic sites. The HMCES DNA-protein cross-link can also be degraded by the SPRTN metalloprotease following unfolding by the BRIP1/FANCJ helicase. Promotes error-free repair of abasic sites by protecting abasic sites from translesion synthesis (TLS) polymerases and endonucleases that are error-prone and would generate mutations and double-strand breaks. Acts as a protease: mediates autocatalytic processing of its N-terminal methionine in order to expose the catalytic cysteine. The HMCES DNA-protein cross-link is then either reversed or degraded. According to a model, the HMCES DNA-protein cross-link. This Gallus gallus (Chicken) protein is Abasic site processing protein HMCES.